The sequence spans 132 residues: Small ribosomal subunit protein uS8 (132 aa).

This sequence belongs to the universal ribosomal protein uS8 family. In terms of assembly, part of the 30S ribosomal subunit. Contacts proteins S5 and S12.

Functionally, one of the primary rRNA binding proteins, it binds directly to 16S rRNA central domain where it helps coordinate assembly of the platform of the 30S subunit. The protein is Small ribosomal subunit protein uS8 of Halothermothrix orenii (strain H 168 / OCM 544 / DSM 9562).